The following is a 473-amino-acid chain: Trehalose-6-phosphate synthase (473 aa).

Residue R10 participates in D-glucose 6-phosphate binding. 21 to 22 (GG) serves as a coordination point for UDP-alpha-D-glucose. Residues Y76 and D130 each contribute to the D-glucose 6-phosphate site. UDP-alpha-D-glucose contacts are provided by R262 and K267. R300 lines the D-glucose 6-phosphate pocket. UDP-alpha-D-glucose is bound by residues F339 and 365–369 (LVAKE).

Belongs to the glycosyltransferase 20 family. In terms of assembly, homotetramer.

It carries out the reaction D-glucose 6-phosphate + UDP-alpha-D-glucose = alpha,alpha-trehalose 6-phosphate + UDP + H(+). Its pathway is glycan biosynthesis; trehalose biosynthesis. In terms of biological role, probably involved in the osmoprotection via the biosynthesis of trehalose. Catalyzes the transfer of glucose from UDP-alpha-D-glucose (UDP-Glc) to D-glucose 6-phosphate (Glc-6-P) to form trehalose-6-phosphate. Acts with retention of the anomeric configuration of the UDP-sugar donor. This is Trehalose-6-phosphate synthase from Citrobacter koseri (strain ATCC BAA-895 / CDC 4225-83 / SGSC4696).